The chain runs to 288 residues: NAD(P)H-hydrate epimerase (288 aa).

The N-terminal 59 residues, 1–59, are a transit peptide targeting the mitochondrion; sequence MSGLRALLGLGLPVAGSRLPRVRVQAGACRARPTWWGPQRLISGGRGDVEGMASSAVKY. The YjeF N-terminal domain maps to 65–275; the sequence is AQAVDQELFN…ALEKKYQLNL (211 aa). Residue 119 to 123 coordinates (6S)-NADPHX; sequence NNGGD. Residue asparagine 120 participates in K(+) binding. An N6-succinyllysine modification is found at lysine 144. Aspartate 185 lines the K(+) pocket. Residues 189–195 and aspartate 218 contribute to the (6S)-NADPHX site; that span reads GFSFKGE. Serine 221 lines the K(+) pocket.

Belongs to the NnrE/AIBP family. Homodimer. Interacts with APOA1 and APOA2. K(+) is required as a cofactor. Undergoes physiological phosphorylation during sperm capacitation, downstream to PKA activation.

Its subcellular location is the mitochondrion. The protein localises to the secreted. The catalysed reaction is (6R)-NADHX = (6S)-NADHX. It catalyses the reaction (6R)-NADPHX = (6S)-NADPHX. In terms of biological role, catalyzes the epimerization of the S- and R-forms of NAD(P)HX, a damaged form of NAD(P)H that is a result of enzymatic or heat-dependent hydration. This is a prerequisite for the S-specific NAD(P)H-hydrate dehydratase to allow the repair of both epimers of NAD(P)HX. Accelerates cholesterol efflux from endothelial cells to high-density lipoprotein (HDL) and thereby regulates angiogenesis. The sequence is that of NAD(P)H-hydrate epimerase from Sus scrofa (Pig).